A 647-amino-acid polypeptide reads, in one-letter code: Paraneoplastic antigen Ma6E (647 aa).

Disordered stretches follow at residues 111–199 (QPQG…AGGA), 227–254 (GAAG…RAAG), 508–580 (AAAP…VPWG), and 608–647 (RGQE…SQGK). Composition is skewed to gly residues over residues 122–149 (GEGG…GEAG), 158–199 (GEAG…AGGA), and 227–251 (GAAG…GEGR). Residues 517 to 570 (PAAAQASPAQGNASEAGPGAEDAAEAASATKEAARGAPAAGEGESAPAGPEGLG) are compositionally biased toward low complexity. Positions 625–636 (EEPENEDEDGAG) are enriched in acidic residues.

In Homo sapiens (Human), this protein is Paraneoplastic antigen Ma6E.